Here is a 356-residue protein sequence, read N- to C-terminus: tRNA N6-adenosine threonylcarbamoyltransferase (356 aa).

Fe cation-binding residues include His-115 and His-119. Residues 138–142 (LVSGG), Asp-171, Gly-184, and Asn-283 contribute to the substrate site. Position 311 (Asp-311) interacts with Fe cation.

This sequence belongs to the KAE1 / TsaD family. Requires Fe(2+) as cofactor.

It localises to the cytoplasm. The enzyme catalyses L-threonylcarbamoyladenylate + adenosine(37) in tRNA = N(6)-L-threonylcarbamoyladenosine(37) in tRNA + AMP + H(+). Functionally, required for the formation of a threonylcarbamoyl group on adenosine at position 37 (t(6)A37) in tRNAs that read codons beginning with adenine. Is involved in the transfer of the threonylcarbamoyl moiety of threonylcarbamoyl-AMP (TC-AMP) to the N6 group of A37, together with TsaE and TsaB. TsaD likely plays a direct catalytic role in this reaction. This is tRNA N6-adenosine threonylcarbamoyltransferase from Prochlorococcus marinus (strain MIT 9515).